The following is a 495-amino-acid chain: Omega-crystallin (495 aa).

The protein belongs to the aldehyde dehydrogenase family. In terms of tissue distribution, lens.

In terms of biological role, omega-crystallins are structural components of squids and octopi eye lens. Contains relatively little if any DHAL activity. The polypeptide is Omega-crystallin (Nototodarus sloanii (Wellington flying squid)).